We begin with the raw amino-acid sequence, 173 residues long: Translation initiation factor IF-3 (173 aa).

This sequence belongs to the IF-3 family. As to quaternary structure, monomer.

The protein resides in the cytoplasm. IF-3 binds to the 30S ribosomal subunit and shifts the equilibrium between 70S ribosomes and their 50S and 30S subunits in favor of the free subunits, thus enhancing the availability of 30S subunits on which protein synthesis initiation begins. This chain is Translation initiation factor IF-3, found in Aromatoleum aromaticum (strain DSM 19018 / LMG 30748 / EbN1) (Azoarcus sp. (strain EbN1)).